We begin with the raw amino-acid sequence, 89 residues long: MLEHELIVTNKLGLHARATAKLVQTMSKFQSNTTLSTKGREVNAKSIMGVMLLAASQGTVIRVRIDGEDEHTAMQALSELFENRFNEDT.

The HPr domain occupies 1-88; that stretch reads MLEHELIVTN…ELFENRFNED (88 aa). His-15 functions as the Pros-phosphohistidine intermediate in the catalytic mechanism. Phosphoserine; by HPrK/P is present on Ser-46.

It belongs to the HPr family.

The protein resides in the cytoplasm. Phosphorylation on Ser-46 inhibits the phosphoryl transfer from enzyme I to HPr. In terms of biological role, general (non sugar-specific) component of the phosphoenolpyruvate-dependent sugar phosphotransferase system (sugar PTS). This major carbohydrate active-transport system catalyzes the phosphorylation of incoming sugar substrates concomitantly with their translocation across the cell membrane. The phosphoryl group from phosphoenolpyruvate (PEP) is transferred to the phosphoryl carrier protein HPr by enzyme I. Phospho-HPr then transfers it to the PTS EIIA domain. This chain is Phosphocarrier protein HPr (ptsH), found in Xylella fastidiosa (strain 9a5c).